Here is a 206-residue protein sequence, read N- to C-terminus: N-(5'-phosphoribosyl)anthranilate isomerase (206 aa).

This sequence belongs to the TrpF family.

The enzyme catalyses N-(5-phospho-beta-D-ribosyl)anthranilate = 1-(2-carboxyphenylamino)-1-deoxy-D-ribulose 5-phosphate. It participates in amino-acid biosynthesis; L-tryptophan biosynthesis; L-tryptophan from chorismate: step 3/5. This is N-(5'-phosphoribosyl)anthranilate isomerase from Azotobacter vinelandii (strain DJ / ATCC BAA-1303).